A 172-amino-acid chain; its full sequence is Putative RNA polymerase II transcriptional coactivator (172 aa).

Disordered regions lie at residues 1 to 43 and 123 to 172; these read MPPK…QDGN and QTDA…DDDE. The span at 24-43 shows a compositional bias: polar residues; it reads GNTGKAQPQELTKGSDQDGN. Residues 131–144 are compositionally biased toward basic and acidic residues; the sequence is PKVKALESNKESIK. Over residues 158–172 the composition is skewed to acidic residues; that stretch reads TSDEEEAAEDEDDDE.

The protein belongs to the transcriptional coactivator PC4 family.

It localises to the nucleus. Its function is as follows. General coactivator that functions cooperatively with TAFs and mediates functional interactions between upstream activators and the general transcriptional machinery. Binds single-stranded DNA. The polypeptide is Putative RNA polymerase II transcriptional coactivator (Neurospora crassa (strain ATCC 24698 / 74-OR23-1A / CBS 708.71 / DSM 1257 / FGSC 987)).